The chain runs to 461 residues: Glutamyl-tRNA reductase (461 aa).

Substrate-binding positions include 50–53 (TCNR), Ser-111, 116–118 (EPQ), and Gln-122. The active-site Nucleophile is the Cys-51. 191–196 (GAGEMA) lines the NADP(+) pocket.

The protein belongs to the glutamyl-tRNA reductase family. As to quaternary structure, homodimer.

It catalyses the reaction (S)-4-amino-5-oxopentanoate + tRNA(Glu) + NADP(+) = L-glutamyl-tRNA(Glu) + NADPH + H(+). It functions in the pathway porphyrin-containing compound metabolism; protoporphyrin-IX biosynthesis; 5-aminolevulinate from L-glutamyl-tRNA(Glu): step 1/2. Catalyzes the NADPH-dependent reduction of glutamyl-tRNA(Glu) to glutamate 1-semialdehyde (GSA). This is Glutamyl-tRNA reductase from Syntrophobacter fumaroxidans (strain DSM 10017 / MPOB).